A 161-amino-acid chain; its full sequence is Large ribosomal subunit protein uL15 (161 aa).

A disordered region spans residues 1–43 (MKLSEISDNPGARKKRMRIGRGIGSGKGKTGGRGGKGQTARSG). Residues 21 to 37 (RGIGSGKGKTGGRGGKG) are compositionally biased toward gly residues.

Belongs to the universal ribosomal protein uL15 family. As to quaternary structure, part of the 50S ribosomal subunit.

Binds to the 23S rRNA. The sequence is that of Large ribosomal subunit protein uL15 from Rhodopseudomonas palustris (strain HaA2).